The chain runs to 360 residues: DNA replication and repair protein RecF (360 aa).

An ATP-binding site is contributed by 30 to 37; the sequence is GQNGSGKT.

Belongs to the RecF family.

It localises to the cytoplasm. Its function is as follows. The RecF protein is involved in DNA metabolism; it is required for DNA replication and normal SOS inducibility. RecF binds preferentially to single-stranded, linear DNA. It also seems to bind ATP. This chain is DNA replication and repair protein RecF, found in Shewanella frigidimarina (strain NCIMB 400).